We begin with the raw amino-acid sequence, 288 residues long: MDKLIKTISESGSFRAYALDSTETVRTAQEKHNTLSSSTVALGRTLIANQILAANQKGDSKITVKVIGNGSFGHIISVADTKGHVKGYIQNPGVDIKKTATGEVLVGPFMGHGQFVSIIDYGTGNPYTSSTPLISGEIGEDFAYYLTESEQTPSAVGLNVLLDKEDKVKVAGGFMLQVLPGASEEEIARYEKRIQEMPAISTLLESDDHIEALLNAIYGDEPFKRLSEEELSFECDCSRERFENALLTLGKDELQAMKDEDHGAEIVCQFCQTKYEFSEADLEELIND.

Disulfide bonds link cysteine 235/cysteine 237 and cysteine 268/cysteine 271.

Belongs to the HSP33 family. Post-translationally, under oxidizing conditions two disulfide bonds are formed involving the reactive cysteines. Under reducing conditions zinc is bound to the reactive cysteines and the protein is inactive.

The protein localises to the cytoplasm. Redox regulated molecular chaperone. Protects both thermally unfolding and oxidatively damaged proteins from irreversible aggregation. Plays an important role in the bacterial defense system toward oxidative stress. This Streptococcus thermophilus (strain ATCC BAA-250 / LMG 18311) protein is 33 kDa chaperonin.